The sequence spans 122 residues: Large ribosomal subunit protein uL14 (122 aa).

It belongs to the universal ribosomal protein uL14 family. In terms of assembly, part of the 50S ribosomal subunit. Forms a cluster with proteins L3 and L19. In the 70S ribosome, L14 and L19 interact and together make contacts with the 16S rRNA in bridges B5 and B8.

Binds to 23S rRNA. Forms part of two intersubunit bridges in the 70S ribosome. The polypeptide is Large ribosomal subunit protein uL14 (Jannaschia sp. (strain CCS1)).